The primary structure comprises 261 residues: Lytic polysaccharide monooxygenase-like protein X325 (261 aa).

Positions 1-17 are cleaved as a signal peptide; sequence MQLSALALATLLATANA. Cu(2+) contacts are provided by His18, His64, and Asp133. Intrachain disulfides connect Cys39/Cys139 and Cys108/Cys155. N-linked (GlcNAc...) asparagine glycans are attached at residues Asn157 and Asn183. Residues 174–210 form a disordered region; sequence LAENTQGSGNSSGHAHGSSGSGSASASKTDSKSSAAS. A compositionally biased stretch (low complexity) spans 180-210; it reads GSGNSSGHAHGSSGSGSASASKTDSKSSAAS. Asn238 carries the GPI-anchor amidated asparagine lipid modification. Positions 239–261 are cleaved as a propeptide — removed in mature form; it reads SGSLAYVNGALAIGGVVAAALLI.

The protein belongs to the X325 family. The cofactor is Cu(2+).

It localises to the cell membrane. Functionally, lytic polysaccharide monooxygenase-like protein that has diverged to biological functions other than polysaccharide degradation since it does not perform oxidative cleavage of polysaccharides. Acts as a cell surface-bound protein that functions in the copper-accumulation pathway. This is Lytic polysaccharide monooxygenase-like protein X325 from Yarrowia lipolytica (strain CLIB 122 / E 150) (Yeast).